We begin with the raw amino-acid sequence, 445 residues long: Tryptamine benzoyltransferase 1 (445 aa).

Catalysis depends on proton acceptor residues His-150 and Asp-382.

This sequence belongs to the plant acyltransferase family.

Hydroxycinnamoyl transferase that catalyzes the transfer of an acyl from benzoyl-CoA to tryptamine, to produce benzoyl tryptamine. Serotonin and tyramine serve as acyl acceptors in vitro. Can use p-coumaroyl-CoA, and to a lesser extent caffeoyl-CoA, as acyl donors. The sequence is that of Tryptamine benzoyltransferase 1 from Oryza sativa subsp. japonica (Rice).